The primary structure comprises 398 residues: Keratinocyte differentiation factor 1 (398 aa).

Disordered regions lie at residues 1–60 (MPRP…SITF) and 123–156 (AEAN…STMG). The segment covering 44–55 (RPDPKDPGHHGP) has biased composition (basic and acidic residues). Ser218 is subject to Phosphoserine. 2 disordered regions span residues 307–340 (RKSR…TMVG) and 369–392 (GAPG…SGAP). Residues 377–389 (HDSSFQGTDTDSS) are compositionally biased toward polar residues.

It is found in the cytoplasm. The protein localises to the cell junction. Functionally, plays a role in the regulation of the epidermis formation during early development. Required both as an inhibitor of basal cell proliferation and a promoter of differentiation of basal progenitor cell progeny. This Homo sapiens (Human) protein is Keratinocyte differentiation factor 1 (KDF1).